Reading from the N-terminus, the 236-residue chain is uncharacterized protein (236 aa).

Positions 1–12 are enriched in basic residues; it reads MKLLGHRKSHGH. The disordered stretch occupies residues 1 to 108; that stretch reads MKLLGHRKSH…KAANRARMTE (108 aa). Over residues 13 to 31 the composition is skewed to basic and acidic residues; sequence QRADASPDAGSKDGCRPDS. Residues 32 to 47 are compositionally biased toward low complexity; the sequence is GRTSGSDTSRGSQTTG. Residues 52–65 show a composition bias toward basic residues; the sequence is PTPKRNQSRRHTKK. Over residues 67-78 the composition is skewed to low complexity; it reads PVAPAPMTAAQA. Residues 90-108 show a composition bias toward basic and acidic residues; that stretch reads LSREERRAEKAANRARMTE. 2 helical membrane passes run 142-162 and 166-186; these read NLLGLFMPSALTLLFVMFAVP and FYLSPAMLILLALMTIDAIIL.

Its subcellular location is the cell membrane. This is an uncharacterized protein from Mycobacterium tuberculosis (strain CDC 1551 / Oshkosh).